The following is a 129-amino-acid chain: uncharacterized protein (129 aa).

This is an uncharacterized protein from Haemophilus influenzae (strain ATCC 51907 / DSM 11121 / KW20 / Rd).